Reading from the N-terminus, the 220-residue chain is Deoxyribose-phosphate aldolase (220 aa).

D89 serves as the catalytic Proton donor/acceptor. K151 serves as the catalytic Schiff-base intermediate with acetaldehyde. K180 functions as the Proton donor/acceptor in the catalytic mechanism.

It belongs to the DeoC/FbaB aldolase family. DeoC type 1 subfamily.

Its subcellular location is the cytoplasm. The enzyme catalyses 2-deoxy-D-ribose 5-phosphate = D-glyceraldehyde 3-phosphate + acetaldehyde. The protein operates within carbohydrate degradation; 2-deoxy-D-ribose 1-phosphate degradation; D-glyceraldehyde 3-phosphate and acetaldehyde from 2-deoxy-alpha-D-ribose 1-phosphate: step 2/2. Catalyzes a reversible aldol reaction between acetaldehyde and D-glyceraldehyde 3-phosphate to generate 2-deoxy-D-ribose 5-phosphate. The sequence is that of Deoxyribose-phosphate aldolase from Streptococcus equi subsp. equi (strain 4047).